The primary structure comprises 64 residues: Small ribosomal subunit protein bS21 (64 aa).

The disordered stretch occupies residues 26 to 64 (DGILSEARRRTRFERPPTRRKRKDAAKRRLAIKAARKAT). Over residues 43–64 (TRRKRKDAAKRRLAIKAARKAT) the composition is skewed to basic residues.

The protein belongs to the bacterial ribosomal protein bS21 family.

This chain is Small ribosomal subunit protein bS21, found in Dehalococcoides mccartyi (strain ATCC BAA-2100 / JCM 16839 / KCTC 5957 / BAV1).